The chain runs to 242 residues: MKILIPTAKEMNTDFPSIEAIPLKPESQAVLDALALYSASQLESFYKVSAEKAAEEFQNIQALKRQTAQHYPALKLFDGLMYRNIKRDKLTEAEQDYLENHVFITSALYGVVPVLSPMAPHRLDFLMKLKVAGKTLKSHWKAAYDETLKKEEVIFSLLSSEFETVFSKEIRAKMVTFKFMEDRGGQLKIHSTISKKARGAFLTALIENQVQTVGEARRLNFAGFVYREDLSQPQGLVFVKEV.

It belongs to the UPF0246 family.

The sequence is that of UPF0246 protein SP_1547 from Streptococcus pneumoniae serotype 4 (strain ATCC BAA-334 / TIGR4).